Here is a 349-residue protein sequence, read N- to C-terminus: tRNA pseudouridine synthase D (349 aa).

Position 27 (Phe27) interacts with substrate. The active-site Nucleophile is Asp80. Asn129 lines the substrate pocket. Residues 155-303 (GVPNYFGAQR…VEAARRAMLL (149 aa)) form the TRUD domain. Phe329 provides a ligand contact to substrate.

The protein belongs to the pseudouridine synthase TruD family.

It carries out the reaction uridine(13) in tRNA = pseudouridine(13) in tRNA. Functionally, responsible for synthesis of pseudouridine from uracil-13 in transfer RNAs. The polypeptide is tRNA pseudouridine synthase D (Citrobacter koseri (strain ATCC BAA-895 / CDC 4225-83 / SGSC4696)).